The sequence spans 466 residues: GTPase Der (466 aa).

2 EngA-type G domains span residues 30-193 (PVVA…PEVS) and 203-376 (RRVA…ASWD). GTP contacts are provided by residues 36-43 (GRPNVGKS), 83-87 (DTGGW), 145-148 (NKVD), 209-216 (GKPNVGKS), 256-260 (DTAGL), and 321-324 (NKWD). Residues 377–459 (TRIATGPLNS…PIRINVRVRE (83 aa)) form the KH-like domain.

The protein belongs to the TRAFAC class TrmE-Era-EngA-EngB-Septin-like GTPase superfamily. EngA (Der) GTPase family. As to quaternary structure, associates with the 50S ribosomal subunit.

In terms of biological role, GTPase that plays an essential role in the late steps of ribosome biogenesis. In Mycolicibacterium paratuberculosis (strain ATCC BAA-968 / K-10) (Mycobacterium paratuberculosis), this protein is GTPase Der.